The sequence spans 433 residues: Succinate--CoA ligase [GDP-forming] subunit beta, mitochondrial (433 aa).

The transit peptide at 1-38 (IPAAPVAAQARKLLRDLAFRPPLLAARSQVVQLTPRRW) directs the protein to the mitochondrion. The 229-residue stretch at 47 to 275 (KKLMSDNGVK…NAEFRQKDIF (229 aa)) folds into the ATP-grasp domain. Q58 provides a ligand contact to GTP. K74 carries the N6-acetyllysine modification. An N6-succinyllysine modification is found at K79. A GTP-binding site is contributed by 91–93 (GRG). 2 positions are modified to N6-acetyllysine: K133 and K140. L147 contributes to the GTP binding site. S162 bears the Phosphoserine mark. Residues K201 and K228 each carry the N6-acetyllysine modification. N244 and D258 together coordinate Mg(2+). An N6-acetyllysine mark is found at K272 and K292. Residue N309 participates in substrate binding. At K339 the chain carries N6-succinyllysine. K348 carries the post-translational modification N6-acetyllysine. 366-368 (GIV) is a substrate binding site. K387 and K424 each carry N6-acetyllysine.

The protein belongs to the succinate/malate CoA ligase beta subunit family. GTP-specific subunit beta subfamily. Heterodimer of an alpha and a beta subunit. The beta subunit determines specificity for GTP. It depends on Mg(2+) as a cofactor.

The protein resides in the mitochondrion. It carries out the reaction GTP + succinate + CoA = succinyl-CoA + GDP + phosphate. The protein operates within carbohydrate metabolism; tricarboxylic acid cycle; succinate from succinyl-CoA (ligase route): step 1/1. Functionally, GTP-specific succinyl-CoA synthetase functions in the citric acid cycle (TCA), coupling the hydrolysis of succinyl-CoA to the synthesis of GTP and thus represents the only step of substrate-level phosphorylation in the TCA. The beta subunit provides nucleotide specificity of the enzyme and binds the substrate succinate, while the binding sites for coenzyme A and phosphate are found in the alpha subunit. The chain is Succinate--CoA ligase [GDP-forming] subunit beta, mitochondrial from Sus scrofa (Pig).